The following is a 303-amino-acid chain: Methionyl-tRNA formyltransferase (303 aa).

Residue 111-114 (SLLP) coordinates (6S)-5,6,7,8-tetrahydrofolate.

Belongs to the Fmt family.

It catalyses the reaction L-methionyl-tRNA(fMet) + (6R)-10-formyltetrahydrofolate = N-formyl-L-methionyl-tRNA(fMet) + (6S)-5,6,7,8-tetrahydrofolate + H(+). Attaches a formyl group to the free amino group of methionyl-tRNA(fMet). The formyl group appears to play a dual role in the initiator identity of N-formylmethionyl-tRNA by promoting its recognition by IF2 and preventing the misappropriation of this tRNA by the elongation apparatus. The chain is Methionyl-tRNA formyltransferase from Ehrlichia canis (strain Jake).